Reading from the N-terminus, the 233-residue chain is Protease inhibitor Egf1.0 (233 aa).

Residues 1–28 (MYIDTGIMSNNIFLFAFFALVGLTRIEA) form the signal peptide. A TIL domain is found at 52-104 (CRENEHYNSTRIECEEECNDRNNKLCYRFQQFCWCNEGYIRNSSHICVKLEDC). The disordered stretch occupies residues 201–233 (FGKPKNSSAEKKPLETETQAQKFNGIIDQETLD).

Belongs to the polydnaviridae EGF-like motif protein family. In terms of assembly, interacts with host PAP1 and PAP3.

Functionally, counteracts the host humoral immune response by inhibiting the processing and the amidolytic activity of host PAP3. Thereby, melanization of host hemolymph, normally producing several reactive intermediates toxic for viruses, is deregulated and proper immune response cannot occur. In Microplitis demolitor (Parasitoid wasp), this protein is Protease inhibitor Egf1.0 (O12).